The following is a 183-amino-acid chain: ARS-binding factor 2, mitochondrial (183 aa).

The N-terminal 26 residues, M1–L26, are a transit peptide targeting the mitochondrion. 2 DNA-binding regions (HMG box) span residues P43–D111 and P116–N183.

It is found in the mitochondrion. Its subcellular location is the nucleus. Functionally, specific binding to the autonomously replicating sequence 1 (ARS1). Interaction with regulatory regions: probably involved in compacting the mitochondrial genome. It might play a positive role in gene expression and replication. This is ARS-binding factor 2, mitochondrial (ABF2) from Saccharomyces cerevisiae (strain ATCC 204508 / S288c) (Baker's yeast).